We begin with the raw amino-acid sequence, 72 residues long: MGSTTDKIKGNANEAIGKAKQGIGEATGSDRLKGEGVVQEVKGKGQQAMGDAKDAAKEAIDRAAAAARRAAE.

The tract at residues 1–55 (MGSTTDKIKGNANEAIGKAKQGIGEATGSDRLKGEGVVQEVKGKGQQAMGDAKDA) is disordered. The segment covering 35–47 (EGVVQEVKGKGQQ) has biased composition (low complexity).

The protein belongs to the UPF0337 (CsbD) family.

The protein is UPF0337 protein bsl2407 of Bradyrhizobium diazoefficiens (strain JCM 10833 / BCRC 13528 / IAM 13628 / NBRC 14792 / USDA 110).